We begin with the raw amino-acid sequence, 408 residues long: Homogentisate geranylgeranyltransferase (408 aa).

A chloroplast-targeting transit peptide spans 1 to 68 (MQATTAAAAA…SAISQATSPR (68 aa)). A run of 9 helical transmembrane segments spans residues 122-142 (HTIF…MKSI), 149-169 (VLKG…YVVG), 194-214 (SVAT…SIGI), 217-237 (GSVP…AYSI), 248-268 (ALLA…LAFF), 286-306 (LVFA…FKDI), 329-349 (VYQL…VVGA), 352-372 (THLL…LTLW), and 386-406 (VTSF…LIPF).

This sequence belongs to the UbiA prenyltransferase family.

The protein localises to the plastid. It is found in the chloroplast membrane. It catalyses the reaction homogentisate + (2E,6E,10E)-geranylgeranyl diphosphate + H(+) = 6-geranylgeranyl-2-methylbenzene-1,4-diol + CO2 + diphosphate. It participates in cofactor biosynthesis; tocopherol biosynthesis. Functionally, involved in the synthesis of tocotrienol (vitamin E). Catalyzes the condensation of homogentisate and geranylgeranyl diphosphate to form 2-methyl-6-geranylgeranylbenzoquinol. Possesses low activity with phytyl diphosphate as substrate. The protein is Homogentisate geranylgeranyltransferase of Triticum aestivum (Wheat).